Reading from the N-terminus, the 305-residue chain is MKKDFLSITDLSAEEYEDILTLAARLKRQRYAGVPHPLLAGKTLAMIFEKASTRTRMSFDVGMYDLGGYALYLNAKDTQLGRGETVADTARVMSRYVHGAIMRTYKHETITEFAKYASIPVINALSDKEHPCQIMADSLTLKEKFGELDGLKIAWIGDGNNVCNSLIMASVQTGMEIAVGTPKGYEPDPAAVKFAKENGGKVTIYDDPVRAVSDAHAIYTDTWISMGEEDIKETKLKDFVGYQLDTALLNKAADDALVLHCLPAHRGEEITDEVIDSMQSGVWDQAENRLHAQKAILVRLMTQGY.

Carbamoyl phosphate-binding positions include 52–55, glutamine 79, arginine 103, and 130–133; these read STRT and HPCQ. Residues asparagine 161, aspartate 221, and 225-226 contribute to the L-ornithine site; that span reads SM. Carbamoyl phosphate contacts are provided by residues 261-262 and arginine 289; that span reads CL.

It belongs to the aspartate/ornithine carbamoyltransferase superfamily. OTCase family.

The protein localises to the cytoplasm. It catalyses the reaction carbamoyl phosphate + L-ornithine = L-citrulline + phosphate + H(+). It functions in the pathway amino-acid biosynthesis; L-arginine biosynthesis; L-arginine from L-ornithine and carbamoyl phosphate: step 1/3. In terms of biological role, reversibly catalyzes the transfer of the carbamoyl group from carbamoyl phosphate (CP) to the N(epsilon) atom of ornithine (ORN) to produce L-citrulline. This Methanocorpusculum labreanum (strain ATCC 43576 / DSM 4855 / Z) protein is Ornithine carbamoyltransferase.